We begin with the raw amino-acid sequence, 371 residues long: Proton-coupled zinc antiporter SLC30A2 (371 aa).

The Cytoplasmic segment spans residues 1–69 (MQTMDKQNLL…DPEKQRARRK (69 aa)). Positions 47 to 50 (HYCH) match the Mitochondrial localization signal motif. Residue cysteine 49 participates in Zn(2+) binding. Residues 70–90 (LYVASAICLVFMIGEIIGGYL) traverse the membrane as a helical segment. Over 91 to 99 (AQSLAIMTD) the chain is Lumenal. The helical transmembrane segment at 100–120 (AAHLLTDFASMLISLFALWVS) threads the bilayer. Residues histidine 102 and aspartate 106 each coordinate Zn(2+). Over 121–136 (SRPATKTMNFGWHRAE) the chain is Cytoplasmic. The helical transmembrane segment at 137–157 (ILGALLSVLSIWVVTGVLVYL) threads the bilayer. Residues 158 to 172 (AVQRLISGDYEIKGD) are Lumenal-facing. A helical transmembrane segment spans residues 173–193 (TMLITSGCAVAVNLIMGLALH). The Cytoplasmic portion of the chain corresponds to 194-219 (QSGHGHSHGNSRDDSSQQQNPSVRAA). Residues 220-240 (FIHVIGDLLQSVGVLVAAYII) form a helical membrane-spanning segment. Zn(2+) contacts are provided by histidine 222 and aspartate 226. The Lumenal segment spans residues 241–248 (YFKPEYKY). A helical transmembrane segment spans residues 249-269 (VDPICTFLFSILVLGTTLTIL). Residues 270–303 (RDVILVLMEGTPKGVDFTTVKNLLLSVDGVEALH) lie on the Cytoplasmic side of the membrane. The Lysosomal targeting motif signature appears at 293–294 (LL). Serine 295 bears the Phosphoserine mark. Histidine 303, histidine 320, and glutamate 354 together coordinate Zn(2+). The chain crosses the membrane as a helical span at residues 304 to 324 (SLHIWALTVAQPVLSVHIAIA). At 325–371 (QNADAQAVLKVARDRLQGKFNFHTMTIQIEKYSEDMKNCQACQGPLE) the chain is on the lumenal side.

Belongs to the cation diffusion facilitator (CDF) transporter (TC 2.A.4) family. SLC30A subfamily. In terms of assembly, homodimer. Interacts (via lysosomal targeting motif) with AP3D1; in AP-3-mediated transport to lysosomes. Interacts with TMEM163. In terms of processing, phosphorylated at Ser-295. Phosphorylation at Ser-295 prevents localization to lysosomes. Dephosphorylation of Ser-295 which triggers localization to lysosomes, accumulation of zinc into lysosomes and lysosomal-mediated cell death is induced by TNF-alpha.

The protein localises to the cytoplasmic vesicle. Its subcellular location is the secretory vesicle membrane. It localises to the zymogen granule membrane. The protein resides in the endosome membrane. It is found in the lysosome membrane. The protein localises to the mitochondrion inner membrane. Its subcellular location is the cell membrane. It catalyses the reaction Zn(2+)(in) + 2 H(+)(out) = Zn(2+)(out) + 2 H(+)(in). Its function is as follows. Electroneutral proton-coupled antiporter concentrating zinc ions into a variety of intracellular organelles including endosomes, zymogen granules and mitochondria. Thereby, plays a crucial role in cellular zinc homeostasis to confer upon cells protection against its potential cytotoxicity. Regulates the zinc concentration of milk, through the transport of zinc ions into secretory vesicles of mammary cells. By concentrating zinc ions into lysosomes participates to lysosomal-mediated cell death during early mammary gland involution. Electroneutral proton-coupled antiporter mediating the efflux of zinc ions through the plasma membrane. The protein is Proton-coupled zinc antiporter SLC30A2 of Mus musculus (Mouse).